A 246-amino-acid chain; its full sequence is Large ribosomal subunit protein uL3 (246 aa).

Gln151 carries the N5-methylglutamine modification.

Belongs to the universal ribosomal protein uL3 family. As to quaternary structure, part of the 50S ribosomal subunit. Forms a cluster with proteins L14 and L19. Post-translationally, methylated by PrmB.

Its function is as follows. One of the primary rRNA binding proteins, it binds directly near the 3'-end of the 23S rRNA, where it nucleates assembly of the 50S subunit. The protein is Large ribosomal subunit protein uL3 of Bartonella bacilliformis (strain ATCC 35685 / KC583 / Herrer 020/F12,63).